Here is a 277-residue protein sequence, read N- to C-terminus: Homeobox protein Nkx-6.2 (277 aa).

The segment at 89–142 is repressor domain; it reads AGVYFGPAAAVARGYPKPLAELPGRPPIFWPGVVQGAPWRDPRLAGPAPAGGVL. Disordered regions lie at residues 132 to 155 and 210 to 250; these read LAGP…RPTF and EMAS…DDEK. The segment at residues 148 to 207 is a DNA-binding region (homeobox); the sequence is KKHSRPTFSGQQIFALEKTFEQTKYLAGPERARLAYSLGMTESQVKVWFQNRRTKWRKRH. Basic and acidic residues predominate over residues 216 to 226; sequence KKQDSDAEKLK.

In terms of tissue distribution, highest expression in brain.

Its subcellular location is the nucleus. Functionally, transcription factor with repressor activity involved in the regulation of axon-glial interactions at myelin paranodes in oligodendrocytes. Binds to the consensus DNA sequence 5'-(A/T)TTAATGA-3'. In oligodendrocytes, binds to MBP and PLP1 promoter regions. The sequence is that of Homeobox protein Nkx-6.2 (NKX6-2) from Homo sapiens (Human).